The sequence spans 470 residues: Cysteine--tRNA ligase (470 aa).

Residue Cys-29 participates in Zn(2+) binding. Residues 31–41 (PTVYNYAHIGN) carry the 'HIGH' region motif. Zn(2+) is bound by residues Cys-211, His-236, and Glu-240. A 'KMSKS' region motif is present at residues 273–277 (KMSKS). Residue Lys-276 coordinates ATP.

This sequence belongs to the class-I aminoacyl-tRNA synthetase family. In terms of assembly, monomer. Zn(2+) is required as a cofactor.

It localises to the cytoplasm. It catalyses the reaction tRNA(Cys) + L-cysteine + ATP = L-cysteinyl-tRNA(Cys) + AMP + diphosphate. The polypeptide is Cysteine--tRNA ligase (Phenylobacterium zucineum (strain HLK1)).